A 436-amino-acid chain; its full sequence is G2/mitotic-specific cyclin-B (436 aa).

A compositionally biased stretch (polar residues) spans 1–17 (MSTINNPLNIKTRSHSS). A disordered region spans residues 1 to 33 (MSTINNPLNIKTRSHSSMGGGMIMDENKVPKSS).

The protein belongs to the cyclin family. Cyclin AB subfamily. Interacts with the cdk1 protein kinase to form a serine/threonine kinase holoenzyme complex also known as maturation promoting factor (MPF). The cyclin subunit imparts substrate specificity to the complex.

Essential for the control of the cell cycle at the G2/M (mitosis) transition. The protein is G2/mitotic-specific cyclin-B (cycB) of Dictyostelium discoideum (Social amoeba).